Here is a 333-residue protein sequence, read N- to C-terminus: Foldase protein PrsA (333 aa).

The signal sequence occupies residues 1–22 (MKSAKQIATALLVGMFTFSAVG). Cys23 carries the N-palmitoyl cysteine lipid modification. A lipid anchor (S-diacylglycerol cysteine) is attached at Cys23. In terms of domain architecture, PpiC spans 192 to 283 (PNTVHLAHIL…FGWHVIKCIK (92 aa)).

The protein belongs to the PrsA family.

It localises to the cell membrane. The catalysed reaction is [protein]-peptidylproline (omega=180) = [protein]-peptidylproline (omega=0). In terms of biological role, plays a major role in protein secretion by helping the post-translocational extracellular folding of several secreted proteins. This is Foldase protein PrsA from Clostridium acetobutylicum (strain ATCC 824 / DSM 792 / JCM 1419 / IAM 19013 / LMG 5710 / NBRC 13948 / NRRL B-527 / VKM B-1787 / 2291 / W).